The primary structure comprises 379 residues: Anthranilate O-methyltransferase 3 (379 aa).

The segment covering 1–10 (MPMRIERDLH) has biased composition (basic and acidic residues). Positions 1–21 (MPMRIERDLHMATGNGETSYT) are disordered. Tyrosine 20 contacts S-adenosyl-L-homocysteine. Glutamine 27 contacts anthranilate. S-adenosyl-L-homocysteine is bound by residues cysteine 61, asparagine 66, aspartate 100, leucine 101, serine 143, and phenylalanine 144. Anthranilate is bound by residues histidine 164 and tryptophan 165. 2 residues coordinate Mg(2+): glutamate 265 and phenylalanine 267.

It belongs to the methyltransferase superfamily. Type-7 methyltransferase family. SABATH subfamily.

It carries out the reaction anthranilate + S-adenosyl-L-methionine = O-methyl anthranilate + S-adenosyl-L-homocysteine. The enzyme catalyses benzoate + S-adenosyl-L-methionine = methyl benzoate + S-adenosyl-L-homocysteine. It catalyses the reaction salicylate + S-adenosyl-L-methionine = methyl salicylate + S-adenosyl-L-homocysteine. Its function is as follows. Methyltransferase involved in the biosynthesis of methyl anthranilate in response to stresses. Utilizes anthranilic acid as substrate. Produces exclusively the O-methyl ester. Can also use benzoic acid as substrate. Low activity with salicylic acid. This chain is Anthranilate O-methyltransferase 3 (AAMT3), found in Zea mays (Maize).